A 599-amino-acid polypeptide reads, in one-letter code: Putative ATP-dependent helicase YeeB (599 aa).

One can recognise a Helicase ATP-binding domain in the interval 30-207 (AFEKRNSQYL…LLPEDEELFD (178 aa)). 43-50 (APPASGKS) is a binding site for ATP. The short motif at 154–157 (DEFH) is the DEAH box element. In terms of domain architecture, Helicase C-terminal spans 236 to 408 (QYTSAINEVL…TVNTMLKAIS (173 aa)).

The protein belongs to the helicase family.

The polypeptide is Putative ATP-dependent helicase YeeB (yeeB) (Bacillus subtilis (strain 168)).